Here is an 83-residue protein sequence, read N- to C-terminus: Erabutoxin b (83 aa).

The first 21 residues, 1-21 (MKTLLLTLVVVTIVCLDLGYT), serve as a signal peptide directing secretion. A loop I region spans residues 24–38 (CFNHQSSQPQTTKTC). Cystine bridges form between C24/C45, C38/C62, C64/C75, and C76/C81. Residues 39–44 (SPGESS) are stretch between loop I and loop II. The tract at residues 45–62 (CYHKQWSDFRGTIIERGC) is loop II. The interval 64-75 (CPTVKPGIKLSC) is loop III.

Belongs to the three-finger toxin family. Short-chain subfamily. Type I alpha-neurotoxin sub-subfamily. As to expression, expressed by the venom gland.

The protein localises to the secreted. Binds with high affinity to muscular nicotinic acetylcholine receptors (nAChRs) (tested on Torpedo marmorata, Kd=0.07 nM), and with low affinity to neuronal alpha-7/CHRNA7 nAChRs (tested on chimeric alpha-7/CHRNA7, Kd=22 uM) and inhibit acetylcholine from binding to the receptor, thereby impairing neuromuscular transmission. Produces peripheral paralysis by blocking neuromuscular transmission at the postsynaptic site. This chain is Erabutoxin b, found in Laticauda semifasciata (Black-banded sea krait).